The primary structure comprises 346 residues: Selenide, water dikinase (346 aa).

Selenocysteine 16 is a catalytic residue. Selenocysteine 16 is a non-standard amino acid (selenocysteine). ATP contacts are provided by residues lysine 19 and 47-49; that span reads TAD. Aspartate 50 serves as a coordination point for Mg(2+). Residues aspartate 67, aspartate 90, and 138-140 each bind ATP; that span reads GHS. Aspartate 90 is a binding site for Mg(2+). Aspartate 226 is a binding site for Mg(2+).

It belongs to the selenophosphate synthase 1 family. Class I subfamily. Homodimer. Requires Mg(2+) as cofactor.

It carries out the reaction hydrogenselenide + ATP + H2O = selenophosphate + AMP + phosphate + 2 H(+). Its function is as follows. Synthesizes selenophosphate from selenide and ATP. The sequence is that of Selenide, water dikinase from Haemophilus ducreyi (strain 35000HP / ATCC 700724).